The primary structure comprises 209 residues: MKDYKNELKVKINLGEHLRLSIPGLVKKIMYKTHYLEIQVEKEKMLTVLKYLKEASKYQCNMLLDIVCVDCLNIEEIKIGRFKLIYVLNSIYNNTRVHLSTYVENNGIIETTSGLFESSVWLEREIWDMFGIYFEKHPDLRRILTDYGFVGYPLKKDFPITGYLEVYYDVNDKKIIYKPIELMQEYRNYNFGAVWGDYERKVYLENIIK.

Belongs to the complex I 30 kDa subunit family. As to quaternary structure, complex I is composed of about 45 different subunits.

Its subcellular location is the mitochondrion inner membrane. It catalyses the reaction a ubiquinone + NADH + 5 H(+)(in) = a ubiquinol + NAD(+) + 4 H(+)(out). Its function is as follows. Core subunit of the mitochondrial membrane respiratory chain NADH dehydrogenase (Complex I) that is believed to belong to the minimal assembly required for catalysis. Complex I functions in the transfer of electrons from NADH to the respiratory chain. The immediate electron acceptor for the enzyme is believed to be ubiquinone. The protein is NADH-ubiquinone oxidoreductase subunit 9 (nad9) of Dictyostelium discoideum (Social amoeba).